The chain runs to 415 residues: MSLQAPKGTKDLLPTESYKWQYLENKFRNIAADFGCREIRTPVFEYTELFQRGVGETTDVVQKEMYTFEDKAGRSITLKPEGTSPAVRAFVEGRLFNETQPTKMYYFTPVMRYENVQKGRLRQHHQFGIEIFGAKDASVDAEVISIPVGIYKELGVEGVELNINSIGCPKCRKTYNEALKKYLSKNYDKLCSTCKTRFDKNPLRILDCKVDTCKEIVKDAPIILDYICDECKDHFESLKSYLDVLDIKYKVDPFIVRGLDYYSKTVFEFIIDDITICAGGRYDYLIEEIGGPSMPAVGFGMGIERLLLTLQEKAIEIPEEAYVDLYLGNIGDKAKLEVLKLAKELRDRHIKCEIDHMGKSVKAQMKYANRIGAKYSMVLGEEELNTGKVSLKRMEDGKQIEVDIKEIDTLIKVFK.

Belongs to the class-II aminoacyl-tRNA synthetase family. As to quaternary structure, homodimer.

It localises to the cytoplasm. The catalysed reaction is tRNA(His) + L-histidine + ATP = L-histidyl-tRNA(His) + AMP + diphosphate + H(+). This Clostridium botulinum (strain Langeland / NCTC 10281 / Type F) protein is Histidine--tRNA ligase.